Reading from the N-terminus, the 151-residue chain is Homeobox protein HD-1 (151 aa).

Residues 87–146 (ESIKSRRFPKFITEALERSFEIDQYPSEAEKARLAKICKLSTKQINNWFTNKRNRTKGHE) constitute a DNA-binding region (homeobox).

The protein localises to the nucleus. This is Homeobox protein HD-1 (HD-1) from Encephalitozoon cuniculi (strain GB-M1) (Microsporidian parasite).